A 169-amino-acid chain; its full sequence is MAENQINSPEITEPSPKVQKLDHPENGNVPFFRVKKLSENAVLPSRASSLAAGYDLSSAAETKVPARGKALVPTDLSIAVPQGTYARIAPRSGLAWKYSIDVGAGVIDADYRGPVGVVLFNHSEVDFEVKVGDRIAQLIVQKIVTPEVEQVDDLDSTVRGSGGFGSTGV.

Over residues 1–10 the composition is skewed to polar residues; the sequence is MAENQINSPE. The disordered stretch occupies residues 1 to 25; the sequence is MAENQINSPEITEPSPKVQKLDHPE. Substrate is bound by residues 91–93, 105–108, Gly-116, Arg-159, and 164–165; these read RSG, GVID, and FG.

The protein belongs to the dUTPase family. Homodimer. Requires Mg(2+) as cofactor. As to expression, vegetative and floral merismatic cells and provascular and vascular merismatic derivatives.

The enzyme catalyses dUTP + H2O = dUMP + diphosphate + H(+). It functions in the pathway pyrimidine metabolism; dUMP biosynthesis; dUMP from dCTP (dUTP route): step 2/2. In terms of biological role, this enzyme is involved in nucleotide metabolism: it produces dUMP, the immediate precursor of thymidine nucleotides and it decreases the intracellular concentration of dUTP so that uracil cannot be incorporated into DNA. It may have as well a metabolic role in merismatic cells. The polypeptide is Deoxyuridine 5'-triphosphate nucleotidohydrolase (Solanum lycopersicum (Tomato)).